The primary structure comprises 463 residues: MAGAGERKGKKDDNGIGTAIDFVLSNARLVLGVGGAAMLGIATLAVKRMYDRAISAPTSPTRLSHSGKRSWEEPNWMGSPRLLNRDMKTGLSRSLQTLPTDSSTFDTDTFCPPRPKPVARKGQVDLKKSRLRMSLQEKLLTYYRNRAAIPAGEQARAKQAAVDICAELRSFLRAKLPDMPLRDMYLSGSLYDDLQVVTADHIQLIVPLVLEQNLWSCIPGEDTIMNVPGFFLVRRENPEYFPRGSSYWDRCVVGGYLSPKTVADTFEKVVAGSINWPAIGSLLDYVIRPAPPPEALTLEVQYERDKHLFIDFLPSVTLGDTVLVAKPHRLAQYDNLWRLSLRPAETARLRALDQADSGCRSLCLKILKAICKSTPALGHLTASQLTNVILHLAQEEADWSPDMLADRFLQALRGLISYLEAGVLPSALNPKVNLFAELTPEEIDELGYTLYCSLSEPEVLLQT.

At 1-23 (MAGAGERKGKKDDNGIGTAIDFV) the chain is on the mitochondrial intermembrane side. The chain crosses the membrane as a helical span at residues 24–46 (LSNARLVLGVGGAAMLGIATLAV). Topologically, residues 47–463 (KRMYDRAISA…LSEPEVLLQT (417 aa)) are cytoplasmic. Residues 49 to 195 (MYDRAISAPT…LSGSLYDDLQ (147 aa)) form a dimerization region. Phosphoserine is present on residues Ser55, Ser59, Ser79, and Ser94. The interval 57-77 (PTSPTRLSHSGKRSWEEPNWM) is disordered. A disordered region spans residues 96–123 (QTLPTDSSTFDTDTFCPPRPKPVARKGQ). A compositionally biased stretch (low complexity) spans 100–110 (TDSSTFDTDTF). The interval 160–169 (AAVDICAELR) is important for interaction with DNM1L. Residues Ser187, Ser189, and His201 each coordinate ADP. Positions 234–242 (RRENPEYFP) are important for interaction with DNM1L. Ser340, Arg342, and Lys368 together coordinate ADP.

It belongs to the SMCR7 family. Homodimer. Interacts with DNM1L. In terms of tissue distribution, expression is relatively high in heart, skeletal muscle, pancreas and kidney.

The protein resides in the mitochondrion outer membrane. In terms of biological role, mitochondrial outer membrane protein which regulates mitochondrial fission/fusion dynamics. Promotes the recruitment and association of the fission mediator dynamin-related protein 1 (DNM1L) to the mitochondrial surface independently of the mitochondrial fission FIS1 and MFF proteins. Regulates DNM1L GTPase activity and DNM1L oligomerization. Binds ADP and can also bind GDP, although with lower affinity. Does not bind CDP, UDP, ATP, AMP or GTP. Inhibits DNM1L GTPase activity in the absence of bound ADP. Requires ADP to stimulate DNM1L GTPase activity and the assembly of DNM1L into long, oligomeric tubules with a spiral pattern, as opposed to the ring-like DNM1L oligomers observed in the absence of bound ADP. Does not require ADP for its function in recruiting DNM1L. The polypeptide is Mitochondrial dynamics protein MIEF1 (Homo sapiens (Human)).